A 299-amino-acid polypeptide reads, in one-letter code: S-methyl-5'-thioadenosine phosphorylase (299 aa).

Residues Ser-14, 56–57, and 89–90 each bind phosphate; these read RH and SA. Met-191 is a binding site for substrate. Thr-192 lines the phosphate pocket. Residue 215–217 coordinates substrate; sequence DYD.

Belongs to the PNP/MTAP phosphorylase family. MTAP subfamily. Homohexamer. Dimer of a homotrimer.

The enzyme catalyses S-methyl-5'-thioadenosine + phosphate = 5-(methylsulfanyl)-alpha-D-ribose 1-phosphate + adenine. It participates in amino-acid biosynthesis; L-methionine biosynthesis via salvage pathway; S-methyl-5-thio-alpha-D-ribose 1-phosphate from S-methyl-5'-thioadenosine (phosphorylase route): step 1/1. Its function is as follows. Catalyzes the reversible phosphorylation of S-methyl-5'-thioadenosine (MTA) to adenine and 5-methylthioribose-1-phosphate. Involved in the breakdown of MTA, a major by-product of polyamine biosynthesis. Responsible for the first step in the methionine salvage pathway after MTA has been generated from S-adenosylmethionine. Has broad substrate specificity with 6-aminopurine nucleosides as preferred substrates. The chain is S-methyl-5'-thioadenosine phosphorylase from Gloeobacter violaceus (strain ATCC 29082 / PCC 7421).